The chain runs to 293 residues: MAITAQLVKELRQKTGAGMMDCKKALTETDGDIDKAIDLLREKGIAKAAKKADRIAAEGLTLIKTDGNTGVILEVNSETDFVAKNEGFQSLLNELADHLLAAKPATIEEAHASKMENGSTVEEHITSAIAKIGEKITLRRFSVITKEDNAAFGSYLHMGGRIGVLAVLNGTTDEELARDIAMHVAAVNPKYISRDQVSEEEANREREVLTQQALQEGKPENIVAKMVEGRLNKFFEEICLLDQAFVKNPDEKVKQVVAAKNASIQTYVRYEVGEGIEKRQDNFAEEVMSQVKK.

The involved in Mg(2+) ion dislocation from EF-Tu stretch occupies residues 79–82; that stretch reads TDFV.

This sequence belongs to the EF-Ts family.

Its subcellular location is the cytoplasm. In terms of biological role, associates with the EF-Tu.GDP complex and induces the exchange of GDP to GTP. It remains bound to the aminoacyl-tRNA.EF-Tu.GTP complex up to the GTP hydrolysis stage on the ribosome. The polypeptide is Elongation factor Ts (Bacillus pumilus (strain SAFR-032)).